The following is a 96-amino-acid chain: uncharacterized protein (96 aa).

The first 28 residues, 1–28 (MNKKAIVGIFMSILMAGLVGCAGSSDAQ), serve as a signal peptide directing secretion.

This is an uncharacterized protein from Butyrivibrio fibrisolvens.